We begin with the raw amino-acid sequence, 345 residues long: Viral Fc-gamma receptor-like protein UL119 (345 aa).

Residues M1–S23 form the signal peptide. The tract at residues S23–I43 is disordered. The Virion surface segment spans residues S24–R293. 12 N-linked (GlcNAc...) asparagine; by host glycosylation sites follow: N34, N48, N95, N104, N148, N179, N198, N217, N225, N241, N244, and N260. Positions Q91–Y190 constitute an Ig-like V-type domain. Residues L294 to T314 form a helical membrane-spanning segment. The Intravirion segment spans residues Y315 to W345.

Its subcellular location is the virion membrane. Functionally, serves as a receptor for the Fc part of human IgG. May thus be involved in interfering with host Ig-mediated immune responses. This Homo sapiens (Human) protein is Viral Fc-gamma receptor-like protein UL119 (UL119/UL118).